The chain runs to 446 residues: tRNA-2-methylthio-N(6)-dimethylallyladenosine synthase (446 aa).

The MTTase N-terminal domain occupies 2–122 (KKAYVKSYGC…LPDLLRQSRE (121 aa)). Cys11, Cys47, Cys85, Cys157, Cys161, and Cys164 together coordinate [4Fe-4S] cluster. Residues 143-375 (RNRGVTGFLT…QDLLDRQRHA (233 aa)) enclose the Radical SAM core domain. The region spanning 378–440 (AASVGTLTEI…SNSLFGEALE (63 aa)) is the TRAM domain.

The protein belongs to the methylthiotransferase family. MiaB subfamily. As to quaternary structure, monomer. [4Fe-4S] cluster is required as a cofactor.

It is found in the cytoplasm. It carries out the reaction N(6)-dimethylallyladenosine(37) in tRNA + (sulfur carrier)-SH + AH2 + 2 S-adenosyl-L-methionine = 2-methylsulfanyl-N(6)-dimethylallyladenosine(37) in tRNA + (sulfur carrier)-H + 5'-deoxyadenosine + L-methionine + A + S-adenosyl-L-homocysteine + 2 H(+). Its function is as follows. Catalyzes the methylthiolation of N6-(dimethylallyl)adenosine (i(6)A), leading to the formation of 2-methylthio-N6-(dimethylallyl)adenosine (ms(2)i(6)A) at position 37 in tRNAs that read codons beginning with uridine. In Methylorubrum extorquens (strain CM4 / NCIMB 13688) (Methylobacterium extorquens), this protein is tRNA-2-methylthio-N(6)-dimethylallyladenosine synthase.